The sequence spans 79 residues: Conotoxin Cal9.2a (79 aa).

Positions 1 to 23 are cleaved as a signal peptide; it reads MNCYLILTVALLLTSAMTGTTTA. Residues 24-33 constitute a propeptide that is removed on maturation; that stretch reads GQLNKKGVTL. 3 disulfide bridges follow: Cys41-Cys58, Cys46-Cys68, and Cys48-Cys73.

Expressed by the venom duct.

The protein localises to the secreted. Functionally, probable neurotoxin with unknown target. Possibly targets ion channels. This is Conotoxin Cal9.2a from Californiconus californicus (California cone).